A 341-amino-acid chain; its full sequence is Holliday junction branch migration complex subunit RuvB (341 aa).

The large ATPase domain (RuvB-L) stretch occupies residues 1–180 (MAKSHTLNPE…FGIQLRLDYY (180 aa)). Positions 19, 20, 61, 64, 65, 66, 170, 180, and 217 each coordinate ATP. Thr65 is a Mg(2+) binding site. Positions 181 to 251 (NDEEMKQIVL…LCLKAFEKMG (71 aa)) are small ATPAse domain (RuvB-S). The tract at residues 254–341 (DLGLDGMDRQ…VHHGQDPTLF (88 aa)) is head domain (RuvB-H). The DNA site is built by Arg309 and Arg314.

Belongs to the RuvB family. Homohexamer. Forms an RuvA(8)-RuvB(12)-Holliday junction (HJ) complex. HJ DNA is sandwiched between 2 RuvA tetramers; dsDNA enters through RuvA and exits via RuvB. An RuvB hexamer assembles on each DNA strand where it exits the tetramer. Each RuvB hexamer is contacted by two RuvA subunits (via domain III) on 2 adjacent RuvB subunits; this complex drives branch migration. In the full resolvosome a probable DNA-RuvA(4)-RuvB(12)-RuvC(2) complex forms which resolves the HJ.

It localises to the cytoplasm. The enzyme catalyses ATP + H2O = ADP + phosphate + H(+). Functionally, the RuvA-RuvB-RuvC complex processes Holliday junction (HJ) DNA during genetic recombination and DNA repair, while the RuvA-RuvB complex plays an important role in the rescue of blocked DNA replication forks via replication fork reversal (RFR). RuvA specifically binds to HJ cruciform DNA, conferring on it an open structure. The RuvB hexamer acts as an ATP-dependent pump, pulling dsDNA into and through the RuvAB complex. RuvB forms 2 homohexamers on either side of HJ DNA bound by 1 or 2 RuvA tetramers; 4 subunits per hexamer contact DNA at a time. Coordinated motions by a converter formed by DNA-disengaged RuvB subunits stimulates ATP hydrolysis and nucleotide exchange. Immobilization of the converter enables RuvB to convert the ATP-contained energy into a lever motion, pulling 2 nucleotides of DNA out of the RuvA tetramer per ATP hydrolyzed, thus driving DNA branch migration. The RuvB motors rotate together with the DNA substrate, which together with the progressing nucleotide cycle form the mechanistic basis for DNA recombination by continuous HJ branch migration. Branch migration allows RuvC to scan DNA until it finds its consensus sequence, where it cleaves and resolves cruciform DNA. The polypeptide is Holliday junction branch migration complex subunit RuvB (Leptospira interrogans serogroup Icterohaemorrhagiae serovar copenhageni (strain Fiocruz L1-130)).